The chain runs to 206 residues: 3-isopropylmalate dehydratase small subunit (206 aa).

The protein belongs to the LeuD family. LeuD type 1 subfamily. As to quaternary structure, heterodimer of LeuC and LeuD.

It carries out the reaction (2R,3S)-3-isopropylmalate = (2S)-2-isopropylmalate. The protein operates within amino-acid biosynthesis; L-leucine biosynthesis; L-leucine from 3-methyl-2-oxobutanoate: step 2/4. Its function is as follows. Catalyzes the isomerization between 2-isopropylmalate and 3-isopropylmalate, via the formation of 2-isopropylmaleate. In Leptospira borgpetersenii serovar Hardjo-bovis (strain JB197), this protein is 3-isopropylmalate dehydratase small subunit.